Consider the following 376-residue polypeptide: Branched-chain-amino-acid aminotransferase, cytosolic (376 aa).

The residue at position 202 (Lys202) is an N6-(pyridoxal phosphate)lysine.

It belongs to the class-IV pyridoxal-phosphate-dependent aminotransferase family. Requires pyridoxal 5'-phosphate as cofactor.

It is found in the cytoplasm. The enzyme catalyses L-leucine + 2-oxoglutarate = 4-methyl-2-oxopentanoate + L-glutamate. It catalyses the reaction L-isoleucine + 2-oxoglutarate = (S)-3-methyl-2-oxopentanoate + L-glutamate. It carries out the reaction L-valine + 2-oxoglutarate = 3-methyl-2-oxobutanoate + L-glutamate. The catalysed reaction is a 2-oxocarboxylate + L-methionine = 4-methylsulfanyl-2-oxobutanoate + an L-alpha-amino acid. The protein operates within amino-acid biosynthesis; L-isoleucine biosynthesis; L-isoleucine from 2-oxobutanoate: step 4/4. It functions in the pathway amino-acid biosynthesis; L-leucine biosynthesis; L-leucine from 3-methyl-2-oxobutanoate: step 4/4. It participates in amino-acid biosynthesis; L-valine biosynthesis; L-valine from pyruvate: step 4/4. Its pathway is amino-acid biosynthesis; L-methionine biosynthesis via salvage pathway; L-methionine from S-methyl-5-thio-alpha-D-ribose 1-phosphate: step 6/6. In terms of biological role, cytoplasmic isozyme of branched-chain-amino-acid aminotransferase, which catalyzes the first reaction in the catabolism of the essential branched chain amino acids (BCAAs) leucine, isoleucine, and valine. Catalyzes the formation of methionine from 2-keto-4-methylthiobutyrate (KMTB) in the methionine salvage pathway primarily using BCAAs (leucine, isoleucine, and valine) as well as lysine and proline as the amino donors. Involved in cell cycle regulation. In Saccharomyces cerevisiae (strain ATCC 204508 / S288c) (Baker's yeast), this protein is Branched-chain-amino-acid aminotransferase, cytosolic.